Here is a 1168-residue protein sequence, read N- to C-terminus: Protein VARIATION IN COMPOUND TRIGGERED ROOT growth response (1168 aa).

The TIR domain occupies 10–171 (WVYDVFLSFS…EIANDVLAKL (162 aa)). The active site involves Glu85. Positions 187–452 (EDHIANMSVL…ACLFNHVKVR (266 aa)) constitute an NB-ARC domain. LRR repeat units lie at residues 539–562 (TSKV…LFLD), 606–629 (LRNL…AMSF), 631–653 (CLKE…SKAT), 676–699 (LNKL…GFNL), 701–720 (SLDY…PEFA), 721–744 (TNIS…YFKN), 795–820 (LNNL…NLES), 839–865 (STNI…FFNL), 873–896 (CREL…SFSN), and 1065–1089 (NVPL…DWRS).

Belongs to the disease resistance NB-LRR family. As to quaternary structure, part of a nuclear protein complex made of VICTR, PAD4 and EDS1. Interacts (via TIR domain) with PAD4 and EDS1.

The protein resides in the cytoplasm. Its subcellular location is the nucleus. It carries out the reaction NAD(+) + H2O = ADP-D-ribose + nicotinamide + H(+). Disease resistance protein of the TIR-NB-LRR-type. Part of the RPS6 locus that contains a cluster of several paralogous disease resistance (R) genes. Resistance proteins guard the plant against pathogens that contain an appropriate avirulence protein via an indirect interaction with this avirulence protein. That triggers a defense system including the hypersensitive response, which restricts the pathogen growth. Required for [5-(3,4-dichlorophenyl)furan-2-yl]-piperidine-1-ylmethanethione-(DFPM-) induced root growth arrest due to reduced number of meristem cells in the division zone of the primary root and inhibition of abscisic acid- (ABA-) induced stomatal closing. The protein is Protein VARIATION IN COMPOUND TRIGGERED ROOT growth response (VICTR) of Arabidopsis thaliana (Mouse-ear cress).